The following is a 98-amino-acid chain: Ig heavy chain V region 6.96 (98 aa).

The region spanning 1–98 (EVQLVESGGG…EDTAMYYCAR (98 aa)) is the Ig-like domain.

This Mus musculus (Mouse) protein is Ig heavy chain V region 6.96.